The primary structure comprises 476 residues: Glutamate mutase epsilon subunit (476 aa).

Arg62 serves as a coordination point for L-glutamate. Gly64 is a binding site for adenosylcob(III)alamin. Arg96 provides a ligand contact to L-glutamate. Asn119 is a binding site for adenosylcob(III)alamin. Residues 145–146, Glu167, and Tyr173 each bind L-glutamate; that span reads RH. Pro176 is a binding site for adenosylcob(III)alamin. Tyr177 is an L-glutamate binding site. Adenosylcob(III)alamin contacts are provided by Phe289, Lys318, and Glu322.

Belongs to the methylaspartate mutase GlmE subunit family. In terms of assembly, heterotetramer composed of 2 epsilon subunits (GlmE) and 2 sigma subunits (GlmS). GlmE exists as a homodimer and GlmS as a monomer. The cofactor is adenosylcob(III)alamin.

It catalyses the reaction (2S,3S)-3-methyl-L-aspartate = L-glutamate. Its pathway is amino-acid degradation; L-glutamate degradation via mesaconate pathway; acetate and pyruvate from L-glutamate: step 1/4. Functionally, catalyzes the carbon skeleton rearrangement of L-glutamate to L-threo-3-methylaspartate ((2S,3S)-3-methylaspartate). The chain is Glutamate mutase epsilon subunit from Halobacterium salinarum (strain ATCC 700922 / JCM 11081 / NRC-1) (Halobacterium halobium).